Consider the following 97-residue polypeptide: Large ribosomal subunit protein uL23 (97 aa).

Belongs to the universal ribosomal protein uL23 family. In terms of assembly, part of the 50S ribosomal subunit. Contacts protein L29, and trigger factor when it is bound to the ribosome.

One of the early assembly proteins it binds 23S rRNA. One of the proteins that surrounds the polypeptide exit tunnel on the outside of the ribosome. Forms the main docking site for trigger factor binding to the ribosome. The polypeptide is Large ribosomal subunit protein uL23 (Brucella abortus (strain S19)).